The chain runs to 491 residues: Anthranilate synthase component 1 (491 aa).

Residues serine 49 and 271 to 273 (PYL) contribute to the L-tryptophan site. Chorismate is bound at residue 306-307 (GT). Glutamate 333 contacts Mg(2+). Chorismate contacts are provided by residues tyrosine 421, arginine 441, 455-457 (GAG), and glycine 457. Glutamate 470 contributes to the Mg(2+) binding site.

This sequence belongs to the anthranilate synthase component I family. In terms of assembly, heterotetramer consisting of two non-identical subunits: a beta subunit (TrpG) and a large alpha subunit (TrpE). Mg(2+) serves as cofactor.

It catalyses the reaction chorismate + L-glutamine = anthranilate + pyruvate + L-glutamate + H(+). Its pathway is amino-acid biosynthesis; L-tryptophan biosynthesis; L-tryptophan from chorismate: step 1/5. Its activity is regulated as follows. Feedback inhibited by tryptophan. Functionally, part of a heterotetrameric complex that catalyzes the two-step biosynthesis of anthranilate, an intermediate in the biosynthesis of L-tryptophan. In the first step, the glutamine-binding beta subunit (TrpG) of anthranilate synthase (AS) provides the glutamine amidotransferase activity which generates ammonia as a substrate that, along with chorismate, is used in the second step, catalyzed by the large alpha subunit of AS (TrpE) to produce anthranilate. In the absence of TrpG, TrpE can synthesize anthranilate directly from chorismate and high concentrations of ammonia. This is Anthranilate synthase component 1 (trpE) from Neisseria gonorrhoeae (strain ATCC 700825 / FA 1090).